We begin with the raw amino-acid sequence, 161 residues long: Putative ecotin-like protein (161 aa).

A signal peptide spans M1–A24.

It belongs to the protease inhibitor I11 (ecotin) family.

This Methylobacillus flagellatus (strain ATCC 51484 / DSM 6875 / VKM B-1610 / KT) protein is Putative ecotin-like protein.